We begin with the raw amino-acid sequence, 184 residues long: Sec-independent protein translocase protein TatB (184 aa).

A helical membrane pass occupies residues 1–21; that stretch reads MFDIGFSELVLLFVVGLIVLG. Positions 149–168 are enriched in acidic residues; the sequence is AEEGEPMLEMGESDFSEDEQ. The disordered stretch occupies residues 149 to 184; that stretch reads AEEGEPMLEMGESDFSEDEQATASSNETIENIKEKV.

The protein belongs to the TatB family. In terms of assembly, the Tat system comprises two distinct complexes: a TatABC complex, containing multiple copies of TatA, TatB and TatC subunits, and a separate TatA complex, containing only TatA subunits. Substrates initially bind to the TatABC complex, which probably triggers association of the separate TatA complex to form the active translocon.

The protein localises to the cell inner membrane. Functionally, part of the twin-arginine translocation (Tat) system that transports large folded proteins containing a characteristic twin-arginine motif in their signal peptide across membranes. Together with TatC, TatB is part of a receptor directly interacting with Tat signal peptides. TatB may form an oligomeric binding site that transiently accommodates folded Tat precursor proteins before their translocation. The polypeptide is Sec-independent protein translocase protein TatB (Histophilus somni (strain 129Pt) (Haemophilus somnus)).